Here is a 655-residue protein sequence, read N- to C-terminus: p-hydroxybenzoic acid efflux pump subunit AaeB (655 aa).

A run of 11 helical transmembrane segments spans residues 13–33 (FAVK…HFQL), 38–58 (WAVL…GGEP), 69–89 (LRII…IAMI), 93–113 (LLMI…SSLV), 121–141 (WGLA…EPLL), 152–172 (EIVI…PRSI), 370–390 (LFWL…IAVV), 407–427 (FIYG…VIIP), 431–451 (QSML…GIEV), 459–479 (MGAL…TFHF), and 482–502 (FLDS…VILL).

Belongs to the aromatic acid exporter ArAE (TC 2.A.85) family.

Its subcellular location is the cell inner membrane. Forms an efflux pump with AaeA. Could function as a metabolic relief valve, allowing to eliminate certain compounds when they accumulate to high levels in the cell. This chain is p-hydroxybenzoic acid efflux pump subunit AaeB, found in Escherichia coli O81 (strain ED1a).